Reading from the N-terminus, the 84-residue chain is U4-theraphotoxin-Hhn1a (84 aa).

A signal peptide spans 1 to 22 (MKVTLIAILTCAAVLVLHTTAA). The propeptide occupies 23 to 47 (EELEESQLMEVGMPDTELAAVDEER). 3 cysteine pairs are disulfide-bonded: C51-C65, C55-C76, and C70-C81.

It belongs to the neurotoxin 12 (Hwtx-2) family. 02 (Hwtx-2) subfamily. As to expression, expressed by the venom gland.

Its subcellular location is the secreted. Its function is as follows. Postsynaptic neurotoxin. The chain is U4-theraphotoxin-Hhn1a from Cyriopagopus hainanus (Chinese bird spider).